The following is a 760-amino-acid chain: Transglutaminase-activating metalloprotease (760 aa).

An N-terminal signal peptide occupies residues 1–33 (MRPTPQRRAVATGALVAVTAMLAVGVQTTSANA). Disordered stretches follow at residues 32 to 59 (NAGQDKAAHPAPRQSIHKPDPGAEPVKL) and 228 to 265 (KQGTGNSQHSGQVQIGTTKSGSSYQMNDTTRGGHKTYN). Residues 34 to 229 (GQDKAAHPAP…KLFEFQGVKQ (196 aa)) constitute a propeptide that is removed on maturation. The span at 228 to 257 (KQGTGNSQHSGQVQIGTTKSGSSYQMNDTT) shows a compositional bias: polar residues. H366 is a Zn(2+) binding site. E367 is a catalytic residue. Zn(2+) is bound by residues H370 and E390. Residue H454 is the Proton donor of the active site. One can recognise a P/Homo B domain in the interval 640 to 760 (TVNTTGGGSV…GTIDKWRLTF (121 aa)).

This sequence belongs to the peptidase M4 family. Requires Zn(2+) as cofactor.

Its subcellular location is the secreted. Cleaves the N-terminal propeptide of transglutaminase thus activating it. This chain is Transglutaminase-activating metalloprotease, found in Streptomyces mobaraensis (Streptoverticillium mobaraense).